The sequence spans 193 residues: dCTP deaminase (193 aa).

DCTP is bound by residues 110–115, aspartate 128, 136–138, tyrosine 171, lysine 178, and glutamine 182; these read RSSLAR and VLE. The active-site Proton donor/acceptor is glutamate 138. The interval 170–193 is disordered; it reads PYNSRQDAKYRGQQGAVASRIDKD.

Belongs to the dCTP deaminase family. Homotrimer.

The enzyme catalyses dCTP + H2O + H(+) = dUTP + NH4(+). The protein operates within pyrimidine metabolism; dUMP biosynthesis; dUMP from dCTP (dUTP route): step 1/2. In terms of biological role, catalyzes the deamination of dCTP to dUTP. The chain is dCTP deaminase from Yersinia enterocolitica serotype O:8 / biotype 1B (strain NCTC 13174 / 8081).